We begin with the raw amino-acid sequence, 338 residues long: Ketol-acid reductoisomerase (NADP(+)) (338 aa).

Residues 1–181 (MKVYYDKDAD…GGTKGGVIET (181 aa)) form the KARI N-terminal Rossmann domain. Residues 24 to 27 (YGSQ), arginine 47, and serine 52 each bind NADP(+). Histidine 107 is a catalytic residue. Position 133 (glycine 133) interacts with NADP(+). One can recognise a KARI C-terminal knotted domain in the interval 182 to 327 (NFREETETDL…GQLRDMMPWI (146 aa)). The Mg(2+) site is built by aspartate 190, glutamate 194, glutamate 226, and glutamate 230. Serine 251 is a substrate binding site.

This sequence belongs to the ketol-acid reductoisomerase family. Requires Mg(2+) as cofactor.

It catalyses the reaction (2R)-2,3-dihydroxy-3-methylbutanoate + NADP(+) = (2S)-2-acetolactate + NADPH + H(+). The enzyme catalyses (2R,3R)-2,3-dihydroxy-3-methylpentanoate + NADP(+) = (S)-2-ethyl-2-hydroxy-3-oxobutanoate + NADPH + H(+). It participates in amino-acid biosynthesis; L-isoleucine biosynthesis; L-isoleucine from 2-oxobutanoate: step 2/4. The protein operates within amino-acid biosynthesis; L-valine biosynthesis; L-valine from pyruvate: step 2/4. Functionally, involved in the biosynthesis of branched-chain amino acids (BCAA). Catalyzes an alkyl-migration followed by a ketol-acid reduction of (S)-2-acetolactate (S2AL) to yield (R)-2,3-dihydroxy-isovalerate. In the isomerase reaction, S2AL is rearranged via a Mg-dependent methyl migration to produce 3-hydroxy-3-methyl-2-ketobutyrate (HMKB). In the reductase reaction, this 2-ketoacid undergoes a metal-dependent reduction by NADPH to yield (R)-2,3-dihydroxy-isovalerate. This chain is Ketol-acid reductoisomerase (NADP(+)), found in Aromatoleum aromaticum (strain DSM 19018 / LMG 30748 / EbN1) (Azoarcus sp. (strain EbN1)).